A 198-amino-acid chain; its full sequence is Adenylate kinase (198 aa).

Residue 10-15 coordinates ATP; that stretch reads GAGKGT. The tract at residues 30 to 59 is NMP; the sequence is STGDMLRAAVQAGSEVGKRAKAVMDAGELV. Residues Thr31, Arg36, 57–59, 85–88, and Gln92 each bind AMP; these read ELV and GYPR. The LID stretch occupies residues 126–142; sequence KRAEDAKAAGQPVRKDD. Arg127 is an ATP binding site. Residues Arg139 and Arg150 each contribute to the AMP site. An ATP-binding site is contributed by Ala178.

It belongs to the adenylate kinase family. In terms of assembly, monomer.

The protein localises to the cytoplasm. It carries out the reaction AMP + ATP = 2 ADP. It participates in purine metabolism; AMP biosynthesis via salvage pathway; AMP from ADP: step 1/1. Its function is as follows. Catalyzes the reversible transfer of the terminal phosphate group between ATP and AMP. Plays an important role in cellular energy homeostasis and in adenine nucleotide metabolism. In Mesorhizobium japonicum (strain LMG 29417 / CECT 9101 / MAFF 303099) (Mesorhizobium loti (strain MAFF 303099)), this protein is Adenylate kinase.